We begin with the raw amino-acid sequence, 371 residues long: N-acetyldiaminopimelate deacetylase (371 aa).

D68 is a catalytic residue. The active-site Proton acceptor is E127.

Belongs to the peptidase M20A family. N-acetyldiaminopimelate deacetylase subfamily.

It catalyses the reaction N-acetyl-(2S,6S)-2,6-diaminopimelate + H2O = (2S,6S)-2,6-diaminopimelate + acetate. It functions in the pathway amino-acid biosynthesis; L-lysine biosynthesis via DAP pathway; LL-2,6-diaminopimelate from (S)-tetrahydrodipicolinate (acetylase route): step 3/3. Functionally, catalyzes the conversion of N-acetyl-diaminopimelate to diaminopimelate and acetate. The sequence is that of N-acetyldiaminopimelate deacetylase from Listeria monocytogenes serotype 4a (strain HCC23).